A 205-amino-acid polypeptide reads, in one-letter code: Anaerobic dimethyl sulfoxide reductase chain B (205 aa).

4Fe-4S ferredoxin-type domains are found at residues 5–33 (YGFFIDSSRCTGCKTCELACKDYKDLTPE), 59–89 (FAYYLSISCNHCEDPACTKVCPSGAMHKRED), and 90–119 (GFVVVDEDVCIGCRYCHMACPYGAPQYNET). [4Fe-4S] cluster-binding residues include Cys-14, Cys-17, Cys-20, Cys-24, Cys-67, Cys-70, Cys-75, Cys-79, Cys-99, Cys-102, Cys-105, Cys-109, Cys-126, Cys-129, Cys-141, and Cys-145. Positions 184 to 205 (KPNANSRPTGDTTGYLANPKEV) are disordered. The segment covering 186 to 195 (NANSRPTGDT) has biased composition (polar residues).

In terms of assembly, heterotrimeric enzyme composed of a catalytic heterodimer (DmsAB) and a membrane anchor protein (DmsC). Requires [4Fe-4S] cluster as cofactor.

Its function is as follows. Electron transfer subunit of the terminal reductase during anaerobic growth on various sulfoxide and N-oxide compounds. This chain is Anaerobic dimethyl sulfoxide reductase chain B (dmsB), found in Escherichia coli (strain K12).